Consider the following 695-residue polypeptide: Elongation factor G (695 aa).

A tr-type G domain is found at 12–286 (DKLRNIGIMA…AVIDYLPSPL (275 aa)). Residues 21–28 (AHIDAGKT), 85–89 (DTPGH), and 139–142 (NKMD) contribute to the GTP site.

This sequence belongs to the TRAFAC class translation factor GTPase superfamily. Classic translation factor GTPase family. EF-G/EF-2 subfamily.

Its subcellular location is the cytoplasm. Catalyzes the GTP-dependent ribosomal translocation step during translation elongation. During this step, the ribosome changes from the pre-translocational (PRE) to the post-translocational (POST) state as the newly formed A-site-bound peptidyl-tRNA and P-site-bound deacylated tRNA move to the P and E sites, respectively. Catalyzes the coordinated movement of the two tRNA molecules, the mRNA and conformational changes in the ribosome. This Thermotoga petrophila (strain ATCC BAA-488 / DSM 13995 / JCM 10881 / RKU-1) protein is Elongation factor G.